The sequence spans 440 residues: L-seryl-tRNA(Sec) selenium transferase (440 aa).

K282 bears the N6-(pyridoxal phosphate)lysine mark.

Belongs to the SelA family. Requires pyridoxal 5'-phosphate as cofactor.

It localises to the cytoplasm. It catalyses the reaction L-seryl-tRNA(Sec) + selenophosphate + H(+) = L-selenocysteinyl-tRNA(Sec) + phosphate. The protein operates within aminoacyl-tRNA biosynthesis; selenocysteinyl-tRNA(Sec) biosynthesis; selenocysteinyl-tRNA(Sec) from L-seryl-tRNA(Sec) (bacterial route): step 1/1. Its function is as follows. Converts seryl-tRNA(Sec) to selenocysteinyl-tRNA(Sec) required for selenoprotein biosynthesis. This Campylobacter jejuni (strain RM1221) protein is L-seryl-tRNA(Sec) selenium transferase.